A 406-amino-acid chain; its full sequence is RNA exonuclease 4 (406 aa).

Over residues 1-10 (MAPELSSNWK) the composition is skewed to polar residues. Disordered stretches follow at residues 1-108 (MAPE…TLPS) and 156-181 (AGLT…PTDL). 3 stretches are compositionally biased toward low complexity: residues 54–64 (SQQQQQASNPS), 72–82 (SQTQSQPSSQK), and 94–108 (SKPT…TLPS). Polar residues predominate over residues 162-173 (GHSSSSPKSNKN). The 152-residue stretch at 216–367 (YLSIDCEMVG…EDARVAMLLF (152 aa)) folds into the Exonuclease domain. Residues 377–387 (ENSNRYEEGQA) are compositionally biased toward basic and acidic residues. Residues 377-406 (ENSNRYEEGQAKKGGNGGGGGGGKKKKGKK) are disordered. Gly residues predominate over residues 388–398 (KKGGNGGGGGG).

It belongs to the REXO4 family.

It localises to the nucleus. Its function is as follows. Exoribonuclease involved in ribosome biosynthesis. Involved in the processing of ITS1, the internal transcribed spacer localized between the 18S and 5.8S rRNAs. The protein is RNA exonuclease 4 (rex-4) of Neurospora crassa (strain ATCC 24698 / 74-OR23-1A / CBS 708.71 / DSM 1257 / FGSC 987).